A 44-amino-acid polypeptide reads, in one-letter code: Thymosin beta-10 (44 aa).

Basic and acidic residues-rich tracts occupy residues 1–25 (MADK…ETQE) and 33–44 (ETIEQEKRSEIS). Positions 1–44 (MADKPDMGEIASFDKAKLKKTETQEKNTLPTKETIEQEKRSEIS) are disordered. Ala2 carries the post-translational modification N-acetylalanine. An N6-acetyllysine modification is found at Lys4. Ser12 bears the Phosphoserine mark. At Lys15 the chain carries N6-acetyllysine. A phosphothreonine mark is found at Thr21, Thr23, and Thr34. An N6-acetyllysine modification is found at Lys39. Ser41 bears the Phosphoserine mark.

This sequence belongs to the thymosin beta family.

The protein localises to the cytoplasm. It localises to the cytoskeleton. Plays an important role in the organization of the cytoskeleton. Binds to and sequesters actin monomers (G actin) and therefore inhibits actin polymerization. This chain is Thymosin beta-10 (Tmsb10), found in Rattus norvegicus (Rat).